A 370-amino-acid polypeptide reads, in one-letter code: Sodium-dependent organic anion transporter (370 aa).

Residues 1 to 24 are disordered; it reads MSADCEGNSTCPANSTEEDPPVGM. Over 1-32 the chain is Extracellular; it reads MSADCEGNSTCPANSTEEDPPVGMEGQGSLKL. Residues Asn8 and Asn14 are each glycosylated (N-linked (GlcNAc...) asparagine). A helical membrane pass occupies residues 33 to 53; that stretch reads VFTVLSAVMVGLVMFSFGCSV. Residues 54–67 are Cytoplasmic-facing; the sequence is ESRKLWLHLRRPWG. Residues 68–88 form a helical membrane-spanning segment; the sequence is IAVGLLCQFGLMPLTAYLLAI. Residues 89 to 97 lie on the Extracellular side of the membrane; the sequence is GFGLKPFQA. The helical transmembrane segment at 98-118 threads the bilayer; the sequence is IAVLIMGSCPGGTVSNVLTFW. Topologically, residues 119-126 are cytoplasmic; that stretch reads VDGDMDLS. A helical membrane pass occupies residues 127–147; it reads ISMTTCSTVAALGMMPLCLYV. Over 148–159 the chain is Extracellular; the sequence is YTRSWTLPQSLT. A helical membrane pass occupies residues 160–180; sequence IPYQSIGITLVSLVVPVASGI. Residues 181–195 are Cytoplasmic-facing; sequence YVNYRWPKQATFILK. The helical transmembrane segment at 196-216 threads the bilayer; that stretch reads VGAAVGGMLLLVVAVTGVVLA. Over 217 to 224 the chain is Extracellular; it reads KGWNIDVT. A helical membrane pass occupies residues 225–245; sequence LLVISCIFPLVGHVMGFLLAF. At 246 to 265 the chain is on the cytoplasmic side; that stretch reads LTHQSWQRCRTISIETGAQN. The chain crosses the membrane as a helical span at residues 266–283; that stretch reads IQLCIAMMQLSFSAEYLV. Position 284 (Gln284) is a topological domain, extracellular. The helical transmembrane segment at 285-305 threads the bilayer; that stretch reads LLNFALAYGLFQVLHGLLIVA. Topologically, residues 306-370 are cytoplasmic; it reads AYQAYKRRQK…ELTSHVPSCE (65 aa).

It belongs to the bile acid:sodium symporter (BASS) (TC 2.A.28) family. In terms of processing, glycosylated. Highly expressed in heart, lung, spleen and adrenal gland. Moderately expressed in skeletal muscle, testis and small intestine.

The protein localises to the membrane. It carries out the reaction estrone 3-sulfate(out) + 2 Na(+)(out) = estrone 3-sulfate(in) + 2 Na(+)(in). The catalysed reaction is 17beta-estradiol 3-sulfate(out) + 2 Na(+)(out) = 17beta-estradiol 3-sulfate(in) + 2 Na(+)(in). It catalyses the reaction dehydroepiandrosterone 3-sulfate(out) + 2 Na(+)(out) = dehydroepiandrosterone 3-sulfate(in) + 2 Na(+)(in). The enzyme catalyses androst-5-ene-diol 3-sulfate(out) + 2 Na(+)(out) = androst-5-ene-diol 3-sulfate(in) + 2 Na(+)(in). It carries out the reaction pregnenolone sulfate(out) + 2 Na(+)(out) = pregnenolone sulfate(in) + 2 Na(+)(in). The catalysed reaction is taurolithocholate 3-sulfate(out) + 2 Na(+)(out) = taurolithocholate 3-sulfate(in) + 2 Na(+)(in). It catalyses the reaction androsterone 3alpha-sulfate(out) + 2 Na(+)(out) = androsterone 3alpha-sulfate(in) + 2 Na(+)(in). The enzyme catalyses 5alpha-dihydrotestosterone sulfate(out) + 2 Na(+)(out) = 5alpha-dihydrotestosterone sulfate(in) + 2 Na(+)(in). It carries out the reaction 17beta-estradiol 17-sulfate(out) + 2 Na(+)(out) = 17beta-estradiol 17-sulfate(in) + 2 Na(+)(in). The catalysed reaction is 17alpha-hydroxypregnenolone 3-sulfate(out) + 2 Na(+)(out) = 17alpha-hydroxypregnenolone 3-sulfate(in) + 2 Na(+)(in). It catalyses the reaction epiandrosterone 3-sulfate(out) + 2 Na(+)(out) = epiandrosterone 3-sulfate(in) + 2 Na(+)(in). The enzyme catalyses epitestosterone 17-sulfate(out) + 2 Na(+)(out) = epitestosterone 17-sulfate(in) + 2 Na(+)(in). It carries out the reaction testosterone 17-sulfate(out) + 2 Na(+)(out) = testosterone 17-sulfate(in) + 2 Na(+)(in). The catalysed reaction is 16alpha-hydroxydehydroepiandrosterone 3-sulfate(out) + 2 Na(+)(out) = 16alpha-hydroxydehydroepiandrosterone 3-sulfate(in) + 2 Na(+)(in). In terms of biological role, transports sulfoconjugated steroid hormones from the extracellular compartment into the cytosol in a sodium-dependent manner without hydrolysis. Steroid sulfate hormones are commonly considered to be biologically inactive metabolites, that may be activated by steroid sulfatases into free steroids. May play an important role by delivering sulfoconjugated steroids to specific target cells in reproductive organs. May play a role transporting the estriol precursor 16alpha-hydroxydehydroepiandrosterone 3-sulfate (16a-OH-DHEAS) at the fetal blood vessel endothelium. Can also transport other sulfoconjugated molecules such as taurolithocholic acid-3-sulfate and sulfoconjugated pyrenes. This Rattus norvegicus (Rat) protein is Sodium-dependent organic anion transporter (Slc10a6).